The chain runs to 147 residues: 3-dehydroquinate dehydratase (147 aa).

Tyrosine 26 functions as the Proton acceptor in the catalytic mechanism. Substrate contacts are provided by asparagine 77, histidine 83, and aspartate 90. Histidine 103 acts as the Proton donor in catalysis. Substrate contacts are provided by residues 104–105 (LS) and arginine 114.

This sequence belongs to the type-II 3-dehydroquinase family. Homododecamer.

The enzyme catalyses 3-dehydroquinate = 3-dehydroshikimate + H2O. Its pathway is metabolic intermediate biosynthesis; chorismate biosynthesis; chorismate from D-erythrose 4-phosphate and phosphoenolpyruvate: step 3/7. Its function is as follows. Catalyzes a trans-dehydration via an enolate intermediate. The sequence is that of 3-dehydroquinate dehydratase from Proteus mirabilis (strain HI4320).